The chain runs to 159 residues: 2-C-methyl-D-erythritol 2,4-cyclodiphosphate synthase (159 aa).

The a divalent metal cation site is built by Asp-10 and His-12. Residues 10 to 12 and 36 to 37 each bind 4-CDP-2-C-methyl-D-erythritol 2-phosphate; these read DVH and HS. His-44 is an a divalent metal cation binding site. 4-CDP-2-C-methyl-D-erythritol 2-phosphate is bound by residues 58–60, 63–67, and Arg-144; these read DIG and FSDTD.

This sequence belongs to the IspF family. Homotrimer. Requires a divalent metal cation as cofactor.

It catalyses the reaction 4-CDP-2-C-methyl-D-erythritol 2-phosphate = 2-C-methyl-D-erythritol 2,4-cyclic diphosphate + CMP. The protein operates within isoprenoid biosynthesis; isopentenyl diphosphate biosynthesis via DXP pathway; isopentenyl diphosphate from 1-deoxy-D-xylulose 5-phosphate: step 4/6. In terms of biological role, involved in the biosynthesis of isopentenyl diphosphate (IPP) and dimethylallyl diphosphate (DMAPP), two major building blocks of isoprenoid compounds. Catalyzes the conversion of 4-diphosphocytidyl-2-C-methyl-D-erythritol 2-phosphate (CDP-ME2P) to 2-C-methyl-D-erythritol 2,4-cyclodiphosphate (ME-CPP) with a corresponding release of cytidine 5-monophosphate (CMP). This chain is 2-C-methyl-D-erythritol 2,4-cyclodiphosphate synthase, found in Paraburkholderia xenovorans (strain LB400).